The primary structure comprises 499 residues: Ribose import ATP-binding protein RbsA 1 (499 aa).

ABC transporter domains lie at 5–240 (LEMR…GRSI) and 249–494 (TEPG…TAGS). 37–44 (GENGAGKS) serves as a coordination point for ATP.

The protein belongs to the ABC transporter superfamily. Ribose importer (TC 3.A.1.2.1) family. As to quaternary structure, the complex is composed of an ATP-binding protein (RbsA), two transmembrane proteins (RbsC) and a solute-binding protein (RbsB).

It is found in the cell membrane. The enzyme catalyses D-ribose(out) + ATP + H2O = D-ribose(in) + ADP + phosphate + H(+). Functionally, part of the ABC transporter complex RbsABC involved in ribose import. Responsible for energy coupling to the transport system. The sequence is that of Ribose import ATP-binding protein RbsA 1 from Rubrobacter xylanophilus (strain DSM 9941 / JCM 11954 / NBRC 16129 / PRD-1).